Reading from the N-terminus, the 341-residue chain is Phenylalanine--tRNA ligase alpha subunit (341 aa).

Glu-252 lines the Mg(2+) pocket.

It belongs to the class-II aminoacyl-tRNA synthetase family. Phe-tRNA synthetase alpha subunit type 1 subfamily. In terms of assembly, tetramer of two alpha and two beta subunits. It depends on Mg(2+) as a cofactor.

The protein resides in the cytoplasm. It carries out the reaction tRNA(Phe) + L-phenylalanine + ATP = L-phenylalanyl-tRNA(Phe) + AMP + diphosphate + H(+). The polypeptide is Phenylalanine--tRNA ligase alpha subunit (Malacoplasma penetrans (strain HF-2) (Mycoplasma penetrans)).